The chain runs to 238 residues: Phosphoribosylaminoimidazole-succinocarboxamide synthase (238 aa).

This sequence belongs to the SAICAR synthetase family.

The catalysed reaction is 5-amino-1-(5-phospho-D-ribosyl)imidazole-4-carboxylate + L-aspartate + ATP = (2S)-2-[5-amino-1-(5-phospho-beta-D-ribosyl)imidazole-4-carboxamido]succinate + ADP + phosphate + 2 H(+). Its pathway is purine metabolism; IMP biosynthesis via de novo pathway; 5-amino-1-(5-phospho-D-ribosyl)imidazole-4-carboxamide from 5-amino-1-(5-phospho-D-ribosyl)imidazole-4-carboxylate: step 1/2. The polypeptide is Phosphoribosylaminoimidazole-succinocarboxamide synthase (Nitrosococcus oceani (strain ATCC 19707 / BCRC 17464 / JCM 30415 / NCIMB 11848 / C-107)).